Consider the following 301-residue polypeptide: uncharacterized protein (301 aa).

Residues 27-85 form the FHA domain; that stretch reads YKIGRHTNKSTSPSPSNLFFNSKVLSRQHAELWLDKDTLSVYIRDVKSSNGTFVNETRL. Residues 187–236 are disordered; the sequence is TGKTRDNRNNHHYSRKSSPHISSLAVPSTKHLDGERDRNLKRSTSPLSSS. S204 bears the Phosphoserine mark. Over residues 216 to 226 the composition is skewed to basic and acidic residues; sequence KHLDGERDRNL. S231 is modified (phosphoserine).

In terms of assembly, interacts with sad1.

It is found in the nucleus. This is an uncharacterized protein from Schizosaccharomyces pombe (strain 972 / ATCC 24843) (Fission yeast).